The sequence spans 184 residues: Ribosome-recycling factor (184 aa).

Belongs to the RRF family.

It localises to the cytoplasm. Its function is as follows. Responsible for the release of ribosomes from messenger RNA at the termination of protein biosynthesis. May increase the efficiency of translation by recycling ribosomes from one round of translation to another. The sequence is that of Ribosome-recycling factor from Stenotrophomonas maltophilia (strain R551-3).